Here is an 8081-residue protein sequence, read N- to C-terminus: Muscle M-line assembly protein unc-89 (8081 aa).

Residues 24 to 57 (DVNYSTHSSRSSYRSESLTSRTDGRGRSTSSEII) are disordered. Residues 28–54 (STHSSRSSYRSESLTSRTDGRGRSTSS) are compositionally biased toward low complexity. One can recognise an SH3 domain in the interval 63–127 (RSYPVYIAIQ…PGSYFETPTE (65 aa)). In terms of domain architecture, DH spans 152-330 (KRDQVYHELL…TTIPQRVHDL (179 aa)). In terms of domain architecture, PH spans 342–498 (DTGKLGRIIR…WSGSRKSSLF (157 aa)). The segment covering 479 to 495 (ASDQQSEFSEWSGSRKS) has biased composition (polar residues). The tract at residues 479 to 531 (ASDQQSEFSEWSGSRKSSLFPGPEEGGPPRKKVKSPPVISPTGSSTSIYSGGS) is disordered. Positions 518 to 531 (SPTGSSTSIYSGGS) are enriched in low complexity. 6 Ig-like C2-type domains span residues 547–633 (GTRV…ASTS), 648–736 (PAFV…AELF), 748–838 (PEFQ…LKVR), 946–1033 (PTFL…ARLV), 1044–1132 (PKFV…AKLT), and 1140–1227 (PEFD…NTLG). Cys568 and Cys621 are joined by a disulfide. Low complexity-rich tracts occupy residues 1283 to 1303 (STKTTTMSTTEVTSTVGGVTV) and 1326 to 1335 (EGSISVSKIE). The interval 1283 to 1892 (STKTTTMSTT…PAPKLTRDLK (610 aa)) is disordered. 6 stretches are compositionally biased toward basic and acidic residues: residues 1336–1351 (VVSKTDSQTDVREGTP), 1361–1446 (ELPK…KEKS), 1453–1490 (KTGDEVKEKSPPKSPTKKEKSPEKPEDVKSPVKKEKSP), 1515–1585 (MTHE…KSPE), 1592–1832 (KKSE…KEKS), and 1839–1857 (KTGDESKEKSPEKPEEKPK). RCSD domains are found at residues 1375–1475 (KSPS…KSPE), 1479–1585 (DVKS…KSPE), 1597–1695 (EVKS…KSPQ), and 1700–1799 (KPAS…KSPE). Residues 1858-1868 (SPTPKKSPPGS) show a composition bias toward pro residues. Positions 1875-1892 (KSPEAEKPPAPKLTRDLK) are enriched in basic and acidic residues. Ig-like C2-type domains lie at 1982 to 2067 (PEFT…AQLT), 2071 to 2163 (PSTT…ADLK), 2171 to 2261 (PKFK…AKVT), 2269 to 2359 (PEFV…AQLK), 2367 to 2455 (PKFT…VQLA), 2463 to 2564 (PTFA…AKPA), 2563 to 2651 (PAFQ…GPLK), 2657 to 2746 (PVEF…ATLL), 2754 to 2858 (PDFL…SEAQ), 2887 to 2980 (PKFI…ATLT), 2994 to 3081 (PEFI…AFLT), 3087 to 3183 (PVFT…SKIT), 3189 to 3280 (PVFE…AEVT), 3286 to 3376 (PTFV…ANFA), 3384 to 3469 (PEFV…EALT), 3482 to 3572 (PEFT…ANMA), 3580 to 3667 (PLFV…ETVG), 3686 to 3777 (PLFI…LKIQ), 3817 to 3908 (PEFV…IIVT), 3920 to 4009 (PDFL…VTLT), 4018 to 4106 (PGFF…VPLT), 4109 to 4201 (PSET…ATVT), 4212 to 4297 (PSFK…AKVN), 4302 to 4387 (PEIV…AALT), 4400 to 4485 (PEIV…AALT), 4489 to 4580 (PGIA…CALT), 4588 to 4678 (PKII…GKIT), 4681 to 4771 (PKIT…AQLT), 4873 to 4961 (PEIV…AALT), 4965 to 5057 (PNVL…GSVV), 5067 to 5160 (PTSG…CKVT), 5171 to 5260 (PKFV…CEFQ), 5277 to 5366 (PRFN…ATYQ), 5383 to 5472 (PKIN…CSVN), 5487 to 5578 (PFFT…AHVQ), 5595 to 5685 (PKFI…SFVR), 5701 to 5790 (PRFT…GTAT), 5815 to 5904 (PKLM…CDVN), 5925 to 6014 (PGFT…AELV), 6038 to 6130 (PRIR…GSLN), and 6150 to 6239 (PGFV…AVLD). An intrachain disulfide couples Cys2582 to Cys2635. 2 cysteine pairs are disulfide-bonded: Cys2908-Cys2964 and Cys3015-Cys3065. 2 disulfide bridges follow: Cys3707-Cys3759 and Cys3838-Cys3890. Residues 4525-4553 (KNGKEITPSDKAQPGSDGDNKPQLVIPDA) form a disordered region. Disulfide bonds link Cys5298/Cys5350, Cys5404/Cys5456, Cys5508/Cys5560, and Cys5616/Cys5669. Intrachain disulfides connect Cys5836–Cys5888 and Cys5946–Cys5998. In terms of domain architecture, Fibronectin type-III 1 spans 6278–6374 (PDRGPFIKEV…SPPSRLMAPP (97 aa)). Ig-like C2-type domains are found at residues 6413 to 6502 (PGVV…IMVD) and 6507 to 6596 (PNFI…CTVT). Residues 6592–6878 (SCTVTVEAEG…VDEALDHPWI (287 aa)) form the Protein kinase 1 domain. Disordered stretches follow at residues 6954–7130 (KKPP…QQKI), 7177–7217 (QVEA…PQPQ), 7284–7311 (PAINLSPNPKSPRRSTPGTKSPVVLSPR), 7324–7343 (RGKPGFLPPGELAEDIDDED), and 7348–7372 (DRKKQVKPKDHDGENDFKDEKERLE). Residues 6999–7009 (RQPPQIPPQPQ) show a composition bias toward pro residues. The segment covering 7087–7110 (LEKRKLIPQDKGETPSHSKKEKTQ) has biased composition (basic and acidic residues). The segment covering 7200–7215 (KPTPSPTSPQKSPVPQ) has biased composition (pro residues). Positions 7284–7302 (PAINLSPNPKSPRRSTPGT) are enriched in polar residues. Positions 7528-7617 (PIFTARLRDV…TDKSSCRLIS (90 aa)) constitute an Ig-like C2-type 50 domain. Residues Cys7549 and Cys7600 are joined by a disulfide bond. The Fibronectin type-III 2 domain maps to 7623 to 7721 (RPGRPEAELS…SSRIVQTHGK (99 aa)). Positions 7746 to 7773 (STNQLGGISEESEEDSEARTANEDMKSN) are disordered. A compositionally biased stretch (basic and acidic residues) spans 7762–7771 (EARTANEDMK). The region spanning 7785-8035 (FQIGGLKFKG…TDEALSHKFL (251 aa)) is the Protein kinase 2 domain.

It belongs to the protein kinase superfamily. CAMK Ser/Thr protein kinase family. As to quaternary structure, may interact (via fibronectin type-III domain 1, Ig-like C2-type domain 48/49 and protein kinase domain 1 or C-terminus of the interkinase region) with lim-9 (via LIM zinc-binding domain). May interact (via fibronectin type-III domain 1, Ig-like C2-type domain 48/49 and kinase protein domain 1 or Ig-like C2-type domain 50, fibronectin type-III domain 2 and kinase protein domain 2) with scpl-1 isoforms a and b (via FCP1 homology domain); the interaction may act as a molecular bridge to bring two unc-89 molecules together or to stabilize a loop between the 2 kinase domains. May interact (via SH3 domain) with unc-15. May interact (via Ig-like C2-type domain 1-3) with cpna-1 (via VWFA domain). May interact (via Ig-like C2-type domain 2/3 and, Ig-like C2-type domain 50 and fibronectin type-III domain 2) with mel-26 (via MATH domain). May interact (via DH and PH domains) with rho-1, ced-10, mig-2 and cdc-42. Expressed in body-wall, pharyngeal muscles and a few muscle cells of the tail (at protein level). Expressed in gonadal myoepithelial sheath cells (at protein level). Isoform c: Expressed in body wall and vulval muscles but not in pharyngeal muscles. Isoform d: Specifically expressed in vulval, intestinal, anal depressor and anal sphincter muscles.

It localises to the cytoplasm. The protein localises to the myofibril. Its subcellular location is the sarcomere. The protein resides in the m line. Functionally, structural component of the muscle M line which is involved in assembly and organization of sarcomere myofilaments. The large isoform a, isoform b, isoform d and isoform f play an essential role in maintaining the organization of sarcomeres but not myofilament alignment during body wall muscle development whereas the small isoform c and isoform d appear to have a minor role. Isoform b and isoform f are required for the organization of unc-15/paramyosin into sarcomere thick filaments in body wall muscles. By binding mel-26, a substrate adapter of the cul-3 E3 ubiquitin-protein ligase complex, regulates the organization of myosin thick filaments, likely by preventing the degradation of microtubule severing protein mei-1. Acts as a guanine nucleotide exchange factor (GEF) for Rho GTPase rho-1 but not ced-10, mig-2 and cdc-42. The large isoforms regulate Ca(2+) signaling during muscle contraction by ensuring the correct localization of sarco-endoplamic reticulum Ca(2+) ATPase sca-1 and ryanodine receptor unc-68. By controlling the contraction and/or organization of pharyngeal muscles, plays a role in the formation of pharyngeal gland cell extension. The protein is Muscle M-line assembly protein unc-89 (unc-89) of Caenorhabditis elegans.